The following is a 490-amino-acid chain: Beta-glucosidase 42 (490 aa).

A beta-D-glucoside contacts are provided by residues Gln35, His137, 182–183 (NE), Tyr317, and Glu388. The Proton donor role is filled by Glu183. The active-site Nucleophile is the Glu388. Asn420 is a glycosylation site (N-linked (GlcNAc...) asparagine). A beta-D-glucoside is bound by residues Trp437, 444-445 (EW), and Phe453.

Belongs to the glycosyl hydrolase 1 family. Expressed at low levels predominantly in root epidermal cells.

The catalysed reaction is Hydrolysis of terminal, non-reducing beta-D-glucosyl residues with release of beta-D-glucose.. In terms of biological role, glucosidase that hydrolyzes scopolin and various beta-glucosides, cellooligosaccharides (mainly cellotriose) and laminarioligosaccharides. Can use p-nitrophenyl-beta-glucosides (pNP beta-Glc) and p-nitrophenyl-beta-D-fucosides (pNP beta-D-Fuc) as substrates, and, to a lower extent, beta-galactosides, beta-mannosides and beta-xylosides. Involved in the secretion of root-derived phenolics upon iron ions (Fe) depletion. Promotes disease resistance toward B.cinerea, H.arabidopsidis and P.syringae pv. tomato DC3000. Required during rhizobacteria-mediated (e.g. P.fluorescens WCS417r) broad-spectrum induced systemic resistance (ISR) against several pathogens. This chain is Beta-glucosidase 42, found in Arabidopsis thaliana (Mouse-ear cress).